Here is a 126-residue protein sequence, read N- to C-terminus: Methylglyoxal synthase (126 aa).

Residues 1–126 (MAGGKCIALI…AERLIKTLNH (126 aa)) enclose the MGS-like domain. Substrate contacts are provided by residues H12, K16, 38 to 41 (TGTT), and 59 to 60 (SG). The active-site Proton donor/acceptor is the D65. H92 is a binding site for substrate.

Belongs to the methylglyoxal synthase family.

It catalyses the reaction dihydroxyacetone phosphate = methylglyoxal + phosphate. Catalyzes the formation of methylglyoxal from dihydroxyacetone phosphate. In Rhizobium rhizogenes (strain K84 / ATCC BAA-868) (Agrobacterium radiobacter), this protein is Methylglyoxal synthase.